A 294-amino-acid chain; its full sequence is MHFKDLGLHDYTLKNLMYENNCCKFYDAVDENNISYVLKFVPSDVTSEGDTFPFVDRFQVKEGVFLVYSSNDFGKEGTDYFTYTGSGGNEVHISGTSSEAGIKPQFIETCHPKHLKRGTKEQEDINSSTSKKSAVINNFSGEKTPNPRPQSSNISERETYVGILNVKCKNKNSSKIRSEKLVSSVIETKHTPGLASILSKEGTTYPNNADGKHISIVNPSSKIYHSSHKQIVKTPIPKSGLSPIERCPFNGQNIKCYSPRPLDHESPQRDFNNNFQLRILKSSVLQRRQSTQNS.

A disordered region spans residues 115–153; sequence LKRGTKEQEDINSSTSKKSAVINNFSGEKTPNPRPQSSN. Polar residues predominate over residues 125–153; it reads INSSTSKKSAVINNFSGEKTPNPRPQSSN. A Phosphoserine modification is found at serine 266.

The protein localises to the cytoplasm. Its function is as follows. Involved in salt tolerance. The chain is Halotolerance protein HAL1 (HAL1) from Saccharomyces cerevisiae (strain ATCC 204508 / S288c) (Baker's yeast).